The sequence spans 264 residues: Hemin import ATP-binding protein HmuV (264 aa).

An ABC transporter domain is found at 2–241 (IEVSGLSVRL…ATMLSVFGCA (240 aa)). Residue 34-41 (GPNGSGKT) coordinates ATP.

Belongs to the ABC transporter superfamily. Heme (hemin) importer (TC 3.A.1.14.5) family. The complex is composed of two ATP-binding proteins (HmuV), two transmembrane proteins (HmuU) and a solute-binding protein (HmuT).

It localises to the cell inner membrane. Functionally, part of the ABC transporter complex HmuTUV involved in hemin import. Responsible for energy coupling to the transport system. The polypeptide is Hemin import ATP-binding protein HmuV (Rhizobium etli (strain ATCC 51251 / DSM 11541 / JCM 21823 / NBRC 15573 / CFN 42)).